Consider the following 254-residue polypeptide: MANLSYWLLALFVATWTDVGLCKKRPKPGGWNTGGSRYPGQGSPGGNRYPPQGGGTWGQPHGGGWGQPHGGGWGQPHGGGWGQPHGGGWGQGGGTHNQWNKPNKPKTSMKHMAGAAAAGAVVGGLGGYMLGSAMSRPMLHFGNDWEDRYYRENMNRYPNQVYYRPVDQYNNQNNFVHDCVNITIKQHTVTTTTKGENFTETDVKMMERVVEQMCVTQYQKESQAYYDGRRSSAVLFSSPPVILLISFLIFLIVG.

A signal peptide spans 1 to 22 (MANLSYWLLALFVATWTDVGLC). The tract at residues 23–231 (KKRPKPGGWN…SQAYYDGRRS (209 aa)) is interaction with GRB2, ERI3 and SYN1. Residues 25–108 (RPKPGGWNTG…WNKPNKPKTS (84 aa)) form a disordered region. 5 tandem repeats follow at residues 51–59 (PQGGGTWGQ), 60–67 (PHGGGWGQ), 68–75 (PHGGGWGQ), 76–83 (PHGGGWGQ), and 84–91 (PHGGGWGQ). Residues 51 to 91 (PQGGGTWGQPHGGGWGQPHGGGWGQPHGGGWGQPHGGGWGQ) form a 5 X 8 AA tandem repeats of P-H-G-G-G-W-G-Q region. Gly residues predominate over residues 52 to 95 (QGGGTWGQPHGGGWGQPHGGGWGQPHGGGWGQPHGGGWGQGGGT). Residues His61, Gly62, Gly63, His69, Gly70, Gly71, His77, Gly78, Gly79, His85, Gly86, and Gly87 each contribute to the Cu(2+) site. The interval 90-231 (GQGGGTHNQW…SQAYYDGRRS (142 aa)) is prP27-30 (protease resistant core). Cys179 and Cys214 are joined by a disulfide. 2 N-linked (GlcNAc...) asparagine glycosylation sites follow: Asn181 and Asn197. Ser231 carries GPI-anchor amidated serine lipidation. Positions 232–254 (SAVLFSSPPVILLISFLIFLIVG) are cleaved as a propeptide — removed in mature form.

Belongs to the prion family. Monomer and homodimer. Has a tendency to aggregate into amyloid fibrils containing a cross-beta spine, formed by a steric zipper of superposed beta-strands. Soluble oligomers may represent an intermediate stage on the path to fibril formation. Copper binding may promote oligomerization. Interacts with GRB2, APP, ERI3/PRNPIP and SYN1. Mislocalized cytosolically exposed PrP interacts with MGRN1; this interaction alters MGRN1 subcellular location and causes lysosomal enlargement. Interacts with KIAA1191.

The protein resides in the cell membrane. Its subcellular location is the golgi apparatus. Its function is as follows. Its primary physiological function is unclear. Has cytoprotective activity against internal or environmental stresses. May play a role in neuronal development and synaptic plasticity. May be required for neuronal myelin sheath maintenance. May play a role in iron uptake and iron homeostasis. Soluble oligomers are toxic to cultured neuroblastoma cells and induce apoptosis (in vitro). Association with GPC1 (via its heparan sulfate chains) targets PRNP to lipid rafts. Also provides Cu(2+) or Zn(2+) for the ascorbate-mediated GPC1 deaminase degradation of its heparan sulfate side chains. In Nothocricetulus migratorius (Gray dwarf hamster), this protein is Major prion protein (PRNP).